Reading from the N-terminus, the 101-residue chain is Large ribosomal subunit protein bL21 (101 aa).

This sequence belongs to the bacterial ribosomal protein bL21 family. Part of the 50S ribosomal subunit. Contacts protein L20.

Its function is as follows. This protein binds to 23S rRNA in the presence of protein L20. In Sulfurovum sp. (strain NBC37-1), this protein is Large ribosomal subunit protein bL21.